The primary structure comprises 441 residues: Ribosomal protein uS12 methylthiotransferase RimO (441 aa).

The MTTase N-terminal domain maps to 8 to 118 (PKIGFVSLGC…VLEHVHHYVP (111 aa)). 6 residues coordinate [4Fe-4S] cluster: C17, C53, C82, C150, C154, and C157. Residues 136 to 373 (LTPRHYAYLK…MQLQQQISAE (238 aa)) form the Radical SAM core domain. Residues 376–441 (QEKVGREILV…DEYDLWGSRV (66 aa)) enclose the TRAM domain.

This sequence belongs to the methylthiotransferase family. RimO subfamily. The cofactor is [4Fe-4S] cluster.

Its subcellular location is the cytoplasm. The enzyme catalyses L-aspartate(89)-[ribosomal protein uS12]-hydrogen + (sulfur carrier)-SH + AH2 + 2 S-adenosyl-L-methionine = 3-methylsulfanyl-L-aspartate(89)-[ribosomal protein uS12]-hydrogen + (sulfur carrier)-H + 5'-deoxyadenosine + L-methionine + A + S-adenosyl-L-homocysteine + 2 H(+). Its function is as follows. Catalyzes the methylthiolation of an aspartic acid residue of ribosomal protein uS12. This Shigella flexneri protein is Ribosomal protein uS12 methylthiotransferase RimO.